Consider the following 191-residue polypeptide: Decorin-binding protein A (191 aa).

Residues 1 to 29 (MIKCNNKTFNNLLKLTILVNLLISCGLTG) form the signal peptide.

The protein belongs to the decorin-binding protein family.

In terms of biological role, binds to decorin which may mediate the adherence of B.burgdorferi to collagen fibers in skin and other tissues. This is Decorin-binding protein A (dbpA) from Borreliella burgdorferi (strain ATCC 35210 / DSM 4680 / CIP 102532 / B31) (Borrelia burgdorferi).